A 329-amino-acid polypeptide reads, in one-letter code: Malate dehydrogenase (329 aa).

12 to 18 is a binding site for NAD(+); the sequence is GAAGQIG. Arg-95 and Arg-101 together coordinate substrate. NAD(+) is bound by residues Asn-108, Gln-115, and 132 to 134; that span reads VGN. Substrate is bound by residues Asn-134 and Arg-165. His-190 acts as the Proton acceptor in catalysis.

Belongs to the LDH/MDH superfamily. MDH type 2 family.

It carries out the reaction (S)-malate + NAD(+) = oxaloacetate + NADH + H(+). Catalyzes the reversible oxidation of malate to oxaloacetate. This Bordetella bronchiseptica (strain ATCC BAA-588 / NCTC 13252 / RB50) (Alcaligenes bronchisepticus) protein is Malate dehydrogenase.